The following is a 115-amino-acid chain: Protein VCF2 (115 aa).

Basic residues predominate over residues 1-12; the sequence is MGGCPVRKRRRN. Residues 1–70 are disordered; it reads MGGCPVRKRR…GPEGNLNQIV (70 aa). The span at 33-44 shows a compositional bias: polar residues; sequence FQDSQDTEFSWS.

This sequence belongs to the VCF family.

The sequence is that of Protein VCF2 from Homo sapiens (Human).